Consider the following 490-residue polypeptide: Argininosuccinate lyase (490 aa).

Disordered stretches follow at residues 426 to 452 (DPES…LSAA) and 469 to 490 (ALAT…TAPE). The span at 440–452 (PAPESMAAALSAA) shows a compositional bias: low complexity. Residues 469–480 (ALATAADERERV) are compositionally biased toward basic and acidic residues.

It belongs to the lyase 1 family. Argininosuccinate lyase subfamily.

The protein resides in the cytoplasm. It catalyses the reaction 2-(N(omega)-L-arginino)succinate = fumarate + L-arginine. The protein operates within amino-acid biosynthesis; L-arginine biosynthesis; L-arginine from L-ornithine and carbamoyl phosphate: step 3/3. The protein is Argininosuccinate lyase of Natronomonas pharaonis (strain ATCC 35678 / DSM 2160 / CIP 103997 / JCM 8858 / NBRC 14720 / NCIMB 2260 / Gabara) (Halobacterium pharaonis).